We begin with the raw amino-acid sequence, 90 residues long: MPSTVINLYYLKINSISGNGSITIGEAAYNSPTNNQKSQGTNSSFGDTSPTESVMENFLNDPDVNDQTSIGNSDTSNVNAPPIAPPPILD.

The tract at residues Gly-25–Asp-90 is disordered. Polar residues-rich tracts occupy residues Asn-30–Val-54 and Asn-65–Asn-79.

This is an uncharacterized protein from Bacillus subtilis (strain 168).